The sequence spans 201 residues: MKINWQKVDNLLPVIIQNVATCEVLMLGYMNQEALEKTLAEKRVTFFSRTKNRLWTKGETSGHFLNVVDMSLDCDNDTLLILVNPIGETCHTGAESCFYQFEKTTQPDWIFLSKLERLIASRKGADPESSYTAQLYAKGTKRIAQKVGEEGVETALAATVKDKAETICEAADLVYHLTVLLQDADLSWSDVIHKLKERHTK.

Residues M1–F111 form a phosphoribosyl-AMP cyclohydrolase region. The interval L112–K201 is phosphoribosyl-ATP pyrophosphohydrolase.

In the N-terminal section; belongs to the PRA-CH family. The protein in the C-terminal section; belongs to the PRA-PH family.

Its subcellular location is the cytoplasm. It catalyses the reaction 1-(5-phospho-beta-D-ribosyl)-ATP + H2O = 1-(5-phospho-beta-D-ribosyl)-5'-AMP + diphosphate + H(+). The enzyme catalyses 1-(5-phospho-beta-D-ribosyl)-5'-AMP + H2O = 1-(5-phospho-beta-D-ribosyl)-5-[(5-phospho-beta-D-ribosylamino)methylideneamino]imidazole-4-carboxamide. The protein operates within amino-acid biosynthesis; L-histidine biosynthesis; L-histidine from 5-phospho-alpha-D-ribose 1-diphosphate: step 2/9. Its pathway is amino-acid biosynthesis; L-histidine biosynthesis; L-histidine from 5-phospho-alpha-D-ribose 1-diphosphate: step 3/9. This chain is Histidine biosynthesis bifunctional protein HisIE (hisI), found in Pasteurella multocida (strain Pm70).